A 238-amino-acid chain; its full sequence is UPF0280 protein Mboo_1274 (238 aa).

The protein belongs to the UPF0280 family.

The chain is UPF0280 protein Mboo_1274 from Methanoregula boonei (strain DSM 21154 / JCM 14090 / 6A8).